Here is a 319-residue protein sequence, read N- to C-terminus: Ribose-phosphate pyrophosphokinase (319 aa).

ATP is bound by residues 41-43 and 100-101; these read DGE and RQ. The Mg(2+) site is built by histidine 134 and aspartate 176. Residue lysine 199 is part of the active site. Residues arginine 201, aspartate 225, and 229–233 each bind D-ribose 5-phosphate; that span reads DTAGT.

This sequence belongs to the ribose-phosphate pyrophosphokinase family. Class I subfamily. As to quaternary structure, homohexamer. It depends on Mg(2+) as a cofactor.

It localises to the cytoplasm. It carries out the reaction D-ribose 5-phosphate + ATP = 5-phospho-alpha-D-ribose 1-diphosphate + AMP + H(+). It functions in the pathway metabolic intermediate biosynthesis; 5-phospho-alpha-D-ribose 1-diphosphate biosynthesis; 5-phospho-alpha-D-ribose 1-diphosphate from D-ribose 5-phosphate (route I): step 1/1. Involved in the biosynthesis of the central metabolite phospho-alpha-D-ribosyl-1-pyrophosphate (PRPP) via the transfer of pyrophosphoryl group from ATP to 1-hydroxyl of ribose-5-phosphate (Rib-5-P). This is Ribose-phosphate pyrophosphokinase from Clostridium perfringens (strain 13 / Type A).